The following is a 520-amino-acid chain: Pentatricopeptide repeat-containing protein At1g28690, mitochondrial (520 aa).

Residues 1–19 constitute a mitochondrion transit peptide; sequence MRIFRFTSISPRILPSNHY. 11 PPR repeats span residues 68 to 98, 99 to 133, 134 to 168, 174 to 208, 209 to 235, 236 to 271, 272 to 306, 307 to 337, 338 to 372, 373 to 403, and 409 to 439; these read DLNISIKLLILHLKCGCLSYARQVFDELPKP, TLSAYNYMISGYLKHGLVKELLLLVQRMSYSGEKA, DGYTLSMVLKASNSRGSTMILPRSLCRLVHARIIK, DDVLITALVDTYVKSGKLESARTVFETMKDENVVC, CTSMISGYMNQGFVEDAEEIFNTTKVK, DIVVYNAMVEGFSRSGETAKRSVDMYISMQRAGFHP, NISTFASVIGACSVLTSHEVGQQVHAQIMKSGVYT, HIKMGSSLLDMYAKCGGINDARRVFDQMQEK, NVFSWTSMIDGYGKNGNPEEALELFTRMKEFRIEP, NYVTFLGALSACSHSGLVDKGYEIFESMQRD, and KMEHYACIVDLMGRAGDLNKAFEFARAMPER. Positions 444 to 520 are type E motif; it reads IWAALLSSCN…TIGRSWTSED (77 aa).

Belongs to the PPR family. PCMP-E subfamily.

Its subcellular location is the mitochondrion. This Arabidopsis thaliana (Mouse-ear cress) protein is Pentatricopeptide repeat-containing protein At1g28690, mitochondrial (PCMP-E34).